We begin with the raw amino-acid sequence, 363 residues long: NAD(P)H-quinone oxidoreductase subunit 1, chloroplastic (363 aa).

7 helical membrane passes run 30 to 50 (LVPILTLVVGITIGVLVIVWL), 98 to 118 (FSIGPSMAVISILLSYSVIPF), 129 to 149 (VGVFLWIAISSIAPIGLLMSG), 165 to 185 (AAQSISYEIPLTLCVLSISLL), 253 to 273 (FAFFYITSYFNLLVSSLFVTI), 303 to 323 (TTTELFITLAKTFFFLFISIT), and 336 to 356 (LLNLGWKFLLPISLGNLLLTT).

This sequence belongs to the complex I subunit 1 family. In terms of assembly, NDH is composed of at least 16 different subunits, 5 of which are encoded in the nucleus.

It is found in the plastid. The protein resides in the chloroplast thylakoid membrane. It carries out the reaction a plastoquinone + NADH + (n+1) H(+)(in) = a plastoquinol + NAD(+) + n H(+)(out). The catalysed reaction is a plastoquinone + NADPH + (n+1) H(+)(in) = a plastoquinol + NADP(+) + n H(+)(out). Functionally, NDH shuttles electrons from NAD(P)H:plastoquinone, via FMN and iron-sulfur (Fe-S) centers, to quinones in the photosynthetic chain and possibly in a chloroplast respiratory chain. The immediate electron acceptor for the enzyme in this species is believed to be plastoquinone. Couples the redox reaction to proton translocation, and thus conserves the redox energy in a proton gradient. The polypeptide is NAD(P)H-quinone oxidoreductase subunit 1, chloroplastic (Pelargonium hortorum (Common geranium)).